Reading from the N-terminus, the 339-residue chain is Centromere protein N (339 aa).

Residues Ser226 and Ser235 each carry the phosphoserine modification.

It belongs to the CENP-N/CHL4 family. As to quaternary structure, component of the CENPA-NAC complex, at least composed of CENPA, CENPC, CENPH, CENPM, CENPN, CENPT and CENPU. The CENPA-NAC complex interacts with the CENPA-CAD complex, composed of CENPI, CENPK, CENPL, CENPO, CENPP, CENPQ, CENPR and CENPS. Interacts directly with CENPA. Identified in a centromere complex containing histones H2A, H2B and H4, and at least CENPA, CENPB, CENPC, CENPT, CENPN, HJURP, SUPT16H, SSRP1 and RSF1.

Its subcellular location is the nucleus. It localises to the chromosome. It is found in the centromere. The protein resides in the kinetochore. In terms of biological role, component of the CENPA-NAC (nucleosome-associated) complex, a complex that plays a central role in assembly of kinetochore proteins, mitotic progression and chromosome segregation. The CENPA-NAC complex recruits the CENPA-CAD (nucleosome distal) complex and may be involved in incorporation of newly synthesized CENPA into centromeres. CENPN is the first protein to bind specifically to CENPA nucleosomes and the direct binding of CENPA nucleosomes by CENPN is required for centromere assembly. Required for chromosome congression and efficiently align the chromosomes on a metaphase plate. In Bos taurus (Bovine), this protein is Centromere protein N (CENPN).